The sequence spans 417 residues: Proteasome-activating nucleotidase (417 aa).

A coiled-coil region spans residues 24-78 (SKYLLDRVKQLEERNVRLKEEYRKIELEKKSVENKKVQYEREIRKLTSELDRLKT). ATP contacts are provided by residues 203 to 208 (GTGKTL) and His-342. Positions 415-417 (MFA) are docks into pockets in the proteasome alpha-ring to cause gate opening.

The protein belongs to the AAA ATPase family. In terms of assembly, homohexamer. The hexameric complex has a two-ring architecture resembling a top hat that caps the 20S proteasome core at one or both ends. Upon ATP-binding, the C-terminus of PAN interacts with the alpha-rings of the proteasome core by binding to the intersubunit pockets.

The protein localises to the cytoplasm. Its function is as follows. ATPase which is responsible for recognizing, binding, unfolding and translocation of substrate proteins into the archaeal 20S proteasome core particle. Is essential for opening the gate of the 20S proteasome via an interaction with its C-terminus, thereby allowing substrate entry and access to the site of proteolysis. Thus, the C-termini of the proteasomal ATPase function like a 'key in a lock' to induce gate opening and therefore regulate proteolysis. Unfolding activity requires energy from ATP hydrolysis, whereas ATP binding alone promotes ATPase-20S proteasome association which triggers gate opening, and supports translocation of unfolded substrates. The chain is Proteasome-activating nucleotidase from Methanocella arvoryzae (strain DSM 22066 / NBRC 105507 / MRE50).